We begin with the raw amino-acid sequence, 159 residues long: Ribosomal RNA large subunit methyltransferase H (159 aa).

Residues Leu-76, Gly-108, and 127-132 contribute to the S-adenosyl-L-methionine site; that span reads FSKMTF.

The protein belongs to the RNA methyltransferase RlmH family. Homodimer.

The protein localises to the cytoplasm. It carries out the reaction pseudouridine(1915) in 23S rRNA + S-adenosyl-L-methionine = N(3)-methylpseudouridine(1915) in 23S rRNA + S-adenosyl-L-homocysteine + H(+). Specifically methylates the pseudouridine at position 1915 (m3Psi1915) in 23S rRNA. This is Ribosomal RNA large subunit methyltransferase H from Bifidobacterium longum (strain DJO10A).